Here is a 223-residue protein sequence, read N- to C-terminus: Pyridoxal phosphate homeostasis protein (223 aa).

N6-(pyridoxal phosphate)lysine is present on Lys36.

This sequence belongs to the pyridoxal phosphate-binding protein YggS/PROSC family. In terms of assembly, monomer.

Functionally, pyridoxal 5'-phosphate (PLP)-binding protein, which is involved in PLP homeostasis. The polypeptide is Pyridoxal phosphate homeostasis protein (Buchnera aphidicola subsp. Baizongia pistaciae (strain Bp)).